The primary structure comprises 69 residues: Toxin Lc a (69 aa).

Disulfide bonds link Cys-3–Cys-20, Cys-13–Cys-41, Cys-45–Cys-56, and Cys-57–Cys-62.

The protein belongs to the three-finger toxin family. Long-chain subfamily. Type II alpha-neurotoxin sub-subfamily. As to expression, expressed by the venom gland.

Its subcellular location is the secreted. In terms of biological role, binds with high affinity to muscular nicotinic acetylcholine receptors (nAChRs), whereas it binds with a low affinity to neuronal alpha-7/CHRNA7 nAChRs. The polypeptide is Toxin Lc a (Laticauda colubrina (Yellow-lipped sea krait)).